The primary structure comprises 213 residues: Orotate phosphoribosyltransferase (213 aa).

Residue Lys26 coordinates 5-phospho-alpha-D-ribose 1-diphosphate. Position 34–35 (34–35) interacts with orotate; the sequence is FF. Residues 72-73, Arg99, Lys100, Lys103, His105, and 124-132 contribute to the 5-phospho-alpha-D-ribose 1-diphosphate site; these read YK and DDVITAGTA. Thr128 and Arg156 together coordinate orotate.

This sequence belongs to the purine/pyrimidine phosphoribosyltransferase family. PyrE subfamily. In terms of assembly, homodimer. Mg(2+) serves as cofactor.

The enzyme catalyses orotidine 5'-phosphate + diphosphate = orotate + 5-phospho-alpha-D-ribose 1-diphosphate. It functions in the pathway pyrimidine metabolism; UMP biosynthesis via de novo pathway; UMP from orotate: step 1/2. In terms of biological role, catalyzes the transfer of a ribosyl phosphate group from 5-phosphoribose 1-diphosphate to orotate, leading to the formation of orotidine monophosphate (OMP). This is Orotate phosphoribosyltransferase from Salmonella paratyphi A (strain ATCC 9150 / SARB42).